The sequence spans 232 residues: Phosphoadenosine 5'-phosphosulfate reductase (232 aa).

Catalysis depends on cysteine 228, which acts as the Nucleophile; cysteine thiosulfonate intermediate.

Belongs to the PAPS reductase family. CysH subfamily.

It is found in the cytoplasm. The catalysed reaction is [thioredoxin]-disulfide + sulfite + adenosine 3',5'-bisphosphate + 2 H(+) = [thioredoxin]-dithiol + 3'-phosphoadenylyl sulfate. Its pathway is sulfur metabolism; hydrogen sulfide biosynthesis; sulfite from sulfate: step 3/3. Catalyzes the formation of sulfite from phosphoadenosine 5'-phosphosulfate (PAPS) using thioredoxin as an electron donor. In Synechococcus sp. (strain ATCC 27144 / PCC 6301 / SAUG 1402/1) (Anacystis nidulans), this protein is Phosphoadenosine 5'-phosphosulfate reductase.